A 728-amino-acid chain; its full sequence is Homoaconitase, mitochondrial (728 aa).

A mitochondrion-targeting transit peptide spans 1 to 24; sequence MVAIPRLARLSVPAWALSARGRFY. Cys362, Cys422, and Cys425 together coordinate [4Fe-4S] cluster.

The protein belongs to the aconitase/IPM isomerase family. Requires [4Fe-4S] cluster as cofactor.

It localises to the mitochondrion. The catalysed reaction is (2R,3S)-homoisocitrate = cis-homoaconitate + H2O. It functions in the pathway amino-acid biosynthesis; L-lysine biosynthesis via AAA pathway; L-alpha-aminoadipate from 2-oxoglutarate: step 3/5. Functionally, catalyzes the reversible hydration of cis-homoaconitate to (2R,3S)-homoisocitrate, a step in the alpha-aminoadipate pathway for lysine biosynthesis. The protein is Homoaconitase, mitochondrial (LYS4) of Cryptococcus neoformans var. neoformans serotype D (strain B-3501A) (Filobasidiella neoformans).